We begin with the raw amino-acid sequence, 104 residues long: N(4)-acetylcytidine amidohydrolase (104 aa).

The ASCH domain occupies 6 to 96; it reads ITFYQRFEAD…TIYPNEHESW (91 aa). The active-site Proton acceptor is the Lys-21. Residue Thr-24 is the Nucleophile of the active site. Glu-74 (proton donor) is an active-site residue.

It belongs to the N(4)-acetylcytidine amidohydrolase family.

The catalysed reaction is N(4)-acetylcytidine + H2O = cytidine + acetate + H(+). It catalyses the reaction N(4)-acetyl-2'-deoxycytidine + H2O = 2'-deoxycytidine + acetate + H(+). The enzyme catalyses N(4)-acetylcytosine + H2O = cytosine + acetate + H(+). Functionally, catalyzes the hydrolysis of N(4)-acetylcytidine (ac4C). This is N(4)-acetylcytidine amidohydrolase from Haemophilus influenzae (strain 86-028NP).